The following is a 378-amino-acid chain: D-alanine--D-alanine ligase (378 aa).

The ATP-grasp domain maps to 149 to 374 (KVLLRAAGIP…FRTVVTDLIE (226 aa)). 189-247 (EAGLQYPLFVKPSRAGSSFGVTKVEQIGDAAALAAAVFEASRHDWRVLVEQGIDAREIE) is an ATP binding site. Positions 328, 341, and 343 each coordinate Mg(2+).

It belongs to the D-alanine--D-alanine ligase family. Mg(2+) serves as cofactor. Mn(2+) is required as a cofactor.

Its subcellular location is the cytoplasm. The catalysed reaction is 2 D-alanine + ATP = D-alanyl-D-alanine + ADP + phosphate + H(+). Its pathway is cell wall biogenesis; peptidoglycan biosynthesis. Its function is as follows. Cell wall formation. The polypeptide is D-alanine--D-alanine ligase (Bifidobacterium animalis subsp. lactis (strain AD011)).